The primary structure comprises 139 residues: MTSESSTPTGSTRALPASITRSSSSTLSTRPSASTPASTGSLTPSTSTASLVVSPPPARSPVVSTRATATTRPRLAAERPGSATTPCPCGDTDKQLAPCLQEGAGFVIRNAAVRLYMRFGRVWFWHCMLGLWGVGNLIW.

A compositionally biased stretch (polar residues) spans 1-12 (MTSESSTPTGST). The tract at residues 1-86 (MTSESSTPTG…AERPGSATTP (86 aa)) is disordered. Low complexity-rich tracts occupy residues 14–53 (ALPA…SLVV) and 60–74 (SPVV…TRPR). Serine 60 is subject to Phosphoserine.

Embryo.

Its function is as follows. Involved in drought, heat, cold, and/or salt tolerance. This Zea mays (Maize) protein is Stress-related protein 1 (SRP1).